A 782-amino-acid polypeptide reads, in one-letter code: DNA repair and recombination protein RAD54-like (782 aa).

Positions 1-20 (MRRSLAPSQRGGQRLSSRND) are enriched in polar residues. The disordered stretch occupies residues 1–28 (MRRSLAPSQRGGQRLSSRNDFTPPLLKK). A required for chromatin remodeling, strand pairing activities and coupling of ATPase activity region spans residues 2-9 (RRSLAPSQ). Thr22 carries the phosphothreonine modification. In terms of domain architecture, Helicase ATP-binding spans 168 to 343 (EGKRGNFNGC…FSLVNFVNPE (176 aa)). 181 to 188 (DEMGLGKT) contributes to the ATP binding site. A DEGH box motif is present at residues 294 to 297 (DEGH). The Helicase C-terminal domain occupies 501–658 (LLDFMLAAIR…NNESAEKHFT (158 aa)). Residues 741–753 (SQKIEATPATETS) show a composition bias toward polar residues. A disordered region spans residues 741 to 782 (SQKIEATPATETSVEAKLEPERRKRPAMPLSDDSADEDFQGF). Positions 773 to 782 (DSADEDFQGF) are enriched in acidic residues.

This sequence belongs to the SNF2/RAD54 helicase family. As to quaternary structure, interacts (via N-terminus) with spn-A/Rad51.

Its subcellular location is the nucleus. Its function is as follows. Involved in mitotic DNA repair and meiotic recombination. Functions in the recombinational DNA repair pathway. Essential for interhomolog gene conversion (GC), but may have a less important role in intersister GC than spn-A/Rad51. In the presence of DNA, spn-A/Rad51 enhances the ATPase activity of okr/Rad54. The chain is DNA repair and recombination protein RAD54-like from Drosophila persimilis (Fruit fly).